The sequence spans 155 residues: uncharacterized protein (155 aa).

The HTH asnC-type domain maps to 4 to 65 (IDEVDEIILR…IIDHSFLGEF (62 aa)). The H-T-H motif DNA-binding region spans 23–42 (LTELSRKVGLTPAAIKNRVE).

This is an uncharacterized protein from Pyrococcus furiosus (strain ATCC 43587 / DSM 3638 / JCM 8422 / Vc1).